The chain runs to 189 residues: GTP cyclohydrolase 1 (189 aa).

Zn(2+) contacts are provided by Cys78, His81, and Cys150.

It belongs to the GTP cyclohydrolase I family. Homomer.

The catalysed reaction is GTP + H2O = 7,8-dihydroneopterin 3'-triphosphate + formate + H(+). It functions in the pathway cofactor biosynthesis; 7,8-dihydroneopterin triphosphate biosynthesis; 7,8-dihydroneopterin triphosphate from GTP: step 1/1. The protein is GTP cyclohydrolase 1 of Lysinibacillus sphaericus (strain C3-41).